A 148-amino-acid chain; its full sequence is NADH-quinone oxidoreductase subunit A (148 aa).

The next 3 helical transmembrane spans lie at Trp14–Gly34, Phe68–Trp88, and Val98–Val118.

The protein belongs to the complex I subunit 3 family. As to quaternary structure, NDH-1 is composed of 13 different subunits. Subunits NuoA, H, J, K, L, M, N constitute the membrane sector of the complex.

It is found in the cell inner membrane. The enzyme catalyses a quinone + NADH + 5 H(+)(in) = a quinol + NAD(+) + 4 H(+)(out). Its function is as follows. NDH-1 shuttles electrons from NADH, via FMN and iron-sulfur (Fe-S) centers, to quinones in the respiratory chain. The immediate electron acceptor for the enzyme in this species is believed to be ubiquinone. Couples the redox reaction to proton translocation (for every two electrons transferred, four hydrogen ions are translocated across the cytoplasmic membrane), and thus conserves the redox energy in a proton gradient. The chain is NADH-quinone oxidoreductase subunit A from Klebsiella pneumoniae subsp. pneumoniae (strain ATCC 700721 / MGH 78578).